Consider the following 271-residue polypeptide: Undecaprenyl-diphosphatase 2 (271 aa).

8 helical membrane passes run 1 to 21 (MNFF…LFPI), 46 to 66 (NFLE…IVYF), 88 to 108 (ALIV…EQTI), 111 to 131 (AFSD…LLFF), 146 to 166 (LKGW…IPGF), 190 to 210 (SMLL…PKLI), 220 to 240 (LSLI…YILM), and 251 to 271 (MLPF…SKAI).

The protein belongs to the UppP family.

It is found in the cell membrane. It carries out the reaction di-trans,octa-cis-undecaprenyl diphosphate + H2O = di-trans,octa-cis-undecaprenyl phosphate + phosphate + H(+). Functionally, catalyzes the dephosphorylation of undecaprenyl diphosphate (UPP). Confers resistance to bacitracin. In Oenococcus oeni (strain ATCC BAA-331 / PSU-1), this protein is Undecaprenyl-diphosphatase 2.